The following is a 296-amino-acid chain: Ribosomal RNA small subunit methyltransferase A (296 aa).

S-adenosyl-L-methionine-binding residues include Asn31, Leu33, Gly58, Glu79, Asp111, and Asn136.

The protein belongs to the class I-like SAM-binding methyltransferase superfamily. rRNA adenine N(6)-methyltransferase family. RsmA subfamily.

The protein localises to the cytoplasm. It carries out the reaction adenosine(1518)/adenosine(1519) in 16S rRNA + 4 S-adenosyl-L-methionine = N(6)-dimethyladenosine(1518)/N(6)-dimethyladenosine(1519) in 16S rRNA + 4 S-adenosyl-L-homocysteine + 4 H(+). Functionally, specifically dimethylates two adjacent adenosines (A1518 and A1519) in the loop of a conserved hairpin near the 3'-end of 16S rRNA in the 30S particle. May play a critical role in biogenesis of 30S subunits. The polypeptide is Ribosomal RNA small subunit methyltransferase A (Lactobacillus johnsonii (strain CNCM I-12250 / La1 / NCC 533)).